Consider the following 254-residue polypeptide: MDNLIIGGTEVKSRLFIGTGKYSSNSIIPRILKKSKSQVITIALRRVDITSKEENMLNYINKDCILLPNTSGARNAEEAIRLARIARAAGCGNWIKIEVISDNKYLLPDNYETIKATEVLAKEGFIVLPYMNPDLMDTKRLVNAGAAAVMPLGAPIGTNRGIATKEMIRIIIDEIATPIVVDAGIGKPSQAAEAMEMGADAVLVNTAIASAGNPVLMAEAFGLAVESGRKAFLAKLGQEKLMAEASSPLTGFLR.

The active-site Schiff-base intermediate with DXP is the Lys-96. Residues Gly-157, 183–184 (AG), and 205–206 (NT) contribute to the 1-deoxy-D-xylulose 5-phosphate site.

The protein belongs to the ThiG family. As to quaternary structure, homotetramer. Forms heterodimers with either ThiH or ThiS.

The protein resides in the cytoplasm. It catalyses the reaction [ThiS sulfur-carrier protein]-C-terminal-Gly-aminoethanethioate + 2-iminoacetate + 1-deoxy-D-xylulose 5-phosphate = [ThiS sulfur-carrier protein]-C-terminal Gly-Gly + 2-[(2R,5Z)-2-carboxy-4-methylthiazol-5(2H)-ylidene]ethyl phosphate + 2 H2O + H(+). The protein operates within cofactor biosynthesis; thiamine diphosphate biosynthesis. Catalyzes the rearrangement of 1-deoxy-D-xylulose 5-phosphate (DXP) to produce the thiazole phosphate moiety of thiamine. Sulfur is provided by the thiocarboxylate moiety of the carrier protein ThiS. In vitro, sulfur can be provided by H(2)S. The polypeptide is Thiazole synthase (Clostridium kluyveri (strain ATCC 8527 / DSM 555 / NBRC 12016 / NCIMB 10680 / K1)).